The chain runs to 937 residues: uncharacterized protein (937 aa).

Threonine 2 is subject to N-acetylthreonine. Residues 281–937 (NESPSSNINT…KKGKGKGGRK (657 aa)) form a disordered region. Positions 290-308 (TTTTSTTTTTTTTTSSPVV) are enriched in low complexity. Residue threonine 292 is the Charge relay system of the active site. Basic and acidic residues-rich tracts occupy residues 309–402 (EESK…EKQQ), 411–431 (AEKE…RLEA), 469–489 (AEKE…KLEA), 512–532 (AEKE…KLEA), 600–615 (AEKE…KLEA), 667–687 (AEKE…KLEA), 738–758 (AEKE…RLEA), and 780–872 (AEKE…KVEE). Residues 345 to 802 (VDDSKEKEEK…KAAEETKVEE (458 aa)) adopt a coiled-coil conformation. Over residues 887–897 (EETEEGEEVDE) the composition is skewed to acidic residues. A compositionally biased stretch (low complexity) spans 898–924 (ASNTTTEQTTTNANQPKKPNNNNNNNK). Residues 925–937 (GKGKKGKGKGGRK) are compositionally biased toward basic residues.

Belongs to the AB hydrolase superfamily.

This is an uncharacterized protein from Dictyostelium discoideum (Social amoeba).